The following is a 251-amino-acid chain: Ribosome maturation factor RimP (251 aa).

Residues 176–251 (SLRRGSAPPQ…ARLKNRDTLH (76 aa)) form a disordered region. Residues 186-196 (DGEEGDEEEGA) are compositionally biased toward acidic residues. Residues 216-226 (PKLDKKSDKPV) show a composition bias toward basic and acidic residues.

This sequence belongs to the RimP family.

Its subcellular location is the cytoplasm. Required for maturation of 30S ribosomal subunits. In Methylorubrum extorquens (strain PA1) (Methylobacterium extorquens), this protein is Ribosome maturation factor RimP.